The chain runs to 208 residues: Small ribosomal subunit protein uS4 (208 aa).

Positions 31–51 (SALDKRAYGPGQHGQRRAKTS) are disordered. The S4 RNA-binding domain maps to 98–156 (RRLDNVVYRMGFATTRSSARQLVTHGHVLVDGKRLDIPSYFVRSGQKIEIKEKTKSNPQ).

The protein belongs to the universal ribosomal protein uS4 family. Part of the 30S ribosomal subunit. Contacts protein S5. The interaction surface between S4 and S5 is involved in control of translational fidelity.

In terms of biological role, one of the primary rRNA binding proteins, it binds directly to 16S rRNA where it nucleates assembly of the body of the 30S subunit. With S5 and S12 plays an important role in translational accuracy. In Helicobacter pylori (strain HPAG1), this protein is Small ribosomal subunit protein uS4.